The sequence spans 518 residues: Kelch repeat and BTB domain-containing protein 4 (518 aa).

In terms of domain architecture, BTB spans 45-112 (ADVTISVEGR…IYHGTVKLRA (68 aa)). A BACK domain is found at 147-239 (CLQVMWLADR…SLKEIGENVH (93 aa)). Kelch repeat units follow at residues 239–285 (HIYL…KHGG), 286–328 (DLYV…SVPG), 331–378 (AIYS…NLNG), 380–430 (IYLL…VHKD), and 432–481 (VFIV…VFRD).

Component of the BCR(KBTBD4) E3 ubiquitin ligase complex, at least composed of CUL3, KBTBD4 and RBX1.

Substrate-specific adapter of a BCR (BTB-CUL3-RBX1) E3 ubiquitin ligase complex which targets CoREST corepressor complex components RCOR1, KDM1A/LSD1 and HDAC2 for proteasomal degradation. RCOR1 is likely to be the primary target while degradation of KDM1A and HDAC2 is likely due to their association with RCOR1. Also targets RCOR3, MIER2 and MIER3 for proteasomal degradation as well as associated proteins ZNF217 and RREB1. Degradation is dependent on the presence of an ELM2 domain in the target proteins. The sequence is that of Kelch repeat and BTB domain-containing protein 4 (KBTBD4) from Pongo abelii (Sumatran orangutan).